The following is a 210-amino-acid chain: MAAETVELHKLKLAELKQECLARGLETKGIKQDLINRLQAYLEDHAEEEANEEDVLGDETEEEEPKPIELPVKEEEPPEKAVDMASEKKVVKITSGIPQTERMQKRAERFNVPVSLESKKAARAARFGISSVPTKGLSSDTKPMVNLDKLKERAQRFGLNVSSISRKSEDDEKLKKRKERFGIVTSSAGTGTTEDTEAKKRKRAERFGIA.

Ala-2 is modified (N-acetylalanine). Residues 8 to 42 form the SAP domain; the sequence is LHKLKLAELKQECLARGLETKGIKQDLINRLQAYL. An N6-acetyllysine modification is found at Lys-10. A compositionally biased stretch (acidic residues) spans 45–64; the sequence is HAEEEANEEDVLGDETEEEE. Residues 45-87 form a disordered region; it reads HAEEEANEEDVLGDETEEEEPKPIELPVKEEEPPEKAVDMASE. Over residues 65 to 87 the composition is skewed to basic and acidic residues; it reads PKPIELPVKEEEPPEKAVDMASE. An N6-acetyllysine modification is found at Lys-142. The tract at residues 162–210 is disordered; sequence SSISRKSEDDEKLKKRKERFGIVTSSAGTGTTEDTEAKKRKRAERFGIA. A Phosphoserine modification is found at Ser-163. Residues 184–193 are compositionally biased toward polar residues; sequence VTSSAGTGTT.

It belongs to the SAP domain-containing ribonucleoprotein family. Interacts with DDX39A. Interacts with FUS. Interacts (via the C-terminal domain) with DDX39B; the interaction is direct and facilitates RNA binding of DDX39B. Component of the transcription/export (TREX) complex at least composed of ALYREF/THOC4, DDX39B, SARNP/CIP29, CHTOP and the THO subcomplex; TREX seems to have dynamic structure involving ATP-dependent remodeling; in the complex interacts directly with DDX39B in a ATP-dependent manner which bridges it to ALYREF/THOC4.

It is found in the nucleus. The protein localises to the nucleus speckle. Binds both single-stranded and double-stranded DNA with higher affinity for the single-stranded form. Specifically binds to scaffold/matrix attachment region DNA. Also binds single-stranded RNA. Enhances RNA unwinding activity of DDX39A. May participate in important transcriptional or translational control of cell growth, metabolism and carcinogenesis. Component of the TREX complex which is thought to couple mRNA transcription, processing and nuclear export, and specifically associates with spliced mRNA and not with unspliced pre-mRNA. The TREX complex is recruited to spliced mRNAs by a transcription-independent mechanism, binds to mRNA upstream of the exon-junction complex (EJC) and is recruited in a splicing- and cap-dependent manner to a region near the 5' end of the mRNA where it functions in mRNA export to the cytoplasm via the TAP/NXF1 pathway. Associates with DDX39B, which facilitates RNA binding of DDX39B and likely plays a role in mRNA export. The polypeptide is SAP domain-containing ribonucleoprotein (Sarnp) (Mus musculus (Mouse)).